The primary structure comprises 508 residues: Photosystem II CP47 reaction center protein (508 aa).

6 consecutive transmembrane segments (helical) span residues 21 to 36, 101 to 115, 140 to 156, 203 to 218, 237 to 252, and 457 to 472; these read SVHIMHTALVAGWAGS, IVFSGLCFLAAIWHW, GIHLFLSGVACFGFGAF, IAAGTLGILAGLFHLS, VLSSSIAAVFFAAFVV, and SFALLFFFGHIWHGAR.

The protein belongs to the PsbB/PsbC family. PsbB subfamily. As to quaternary structure, PSII is composed of 1 copy each of membrane proteins PsbA, PsbB, PsbC, PsbD, PsbE, PsbF, PsbH, PsbI, PsbJ, PsbK, PsbL, PsbM, PsbT, PsbX, PsbY, PsbZ, Psb30/Ycf12, at least 3 peripheral proteins of the oxygen-evolving complex and a large number of cofactors. It forms dimeric complexes. Binds multiple chlorophylls. PSII binds additional chlorophylls, carotenoids and specific lipids. serves as cofactor.

The protein localises to the plastid. Its subcellular location is the chloroplast thylakoid membrane. Its function is as follows. One of the components of the core complex of photosystem II (PSII). It binds chlorophyll and helps catalyze the primary light-induced photochemical processes of PSII. PSII is a light-driven water:plastoquinone oxidoreductase, using light energy to abstract electrons from H(2)O, generating O(2) and a proton gradient subsequently used for ATP formation. This Gossypium barbadense (Sea Island cotton) protein is Photosystem II CP47 reaction center protein.